We begin with the raw amino-acid sequence, 477 residues long: Bifunctional protein HldE (477 aa).

The tract at residues 1-321 is ribokinase; that stretch reads MKILKSFTPR…EYEASLHKST (321 aa). 198–201 provides a ligand contact to ATP; sequence NKKE. Asp266 is a catalytic residue. The cytidylyltransferase stretch occupies residues 348 to 477; it reads FTNGCFDILH…IQKIKGDLHV (130 aa).

It in the N-terminal section; belongs to the carbohydrate kinase PfkB family. This sequence in the C-terminal section; belongs to the cytidylyltransferase family. Homodimer.

It carries out the reaction D-glycero-beta-D-manno-heptose 7-phosphate + ATP = D-glycero-beta-D-manno-heptose 1,7-bisphosphate + ADP + H(+). The enzyme catalyses D-glycero-beta-D-manno-heptose 1-phosphate + ATP + H(+) = ADP-D-glycero-beta-D-manno-heptose + diphosphate. It participates in nucleotide-sugar biosynthesis; ADP-L-glycero-beta-D-manno-heptose biosynthesis; ADP-L-glycero-beta-D-manno-heptose from D-glycero-beta-D-manno-heptose 7-phosphate: step 1/4. Its pathway is nucleotide-sugar biosynthesis; ADP-L-glycero-beta-D-manno-heptose biosynthesis; ADP-L-glycero-beta-D-manno-heptose from D-glycero-beta-D-manno-heptose 7-phosphate: step 3/4. Functionally, catalyzes the phosphorylation of D-glycero-D-manno-heptose 7-phosphate at the C-1 position to selectively form D-glycero-beta-D-manno-heptose-1,7-bisphosphate. Its function is as follows. Catalyzes the ADP transfer from ATP to D-glycero-beta-D-manno-heptose 1-phosphate, yielding ADP-D-glycero-beta-D-manno-heptose. The protein is Bifunctional protein HldE of Sulfurimonas denitrificans (strain ATCC 33889 / DSM 1251) (Thiomicrospira denitrificans (strain ATCC 33889 / DSM 1251)).